The chain runs to 307 residues: Ribonuclease H2 subunit B (307 aa).

Alanine 2 bears the N-acetylalanine mark. Lysine 291 carries the post-translational modification N6-acetyllysine. Serine 292 carries the post-translational modification Phosphoserine.

It belongs to the RNase H2 subunit B family. The RNase H2 complex is a heterotrimer composed of the catalytic subunit RNASEH2A and the non-catalytic subunits RNASEH2B and RNASEH2C.

The protein localises to the nucleus. Non catalytic subunit of RNase H2, an endonuclease that specifically degrades the RNA of RNA:DNA hybrids. Participates in DNA replication, possibly by mediating the removal of lagging-strand Okazaki fragment RNA primers during DNA replication. Mediates the excision of single ribonucleotides from DNA:RNA duplexes. This chain is Ribonuclease H2 subunit B (Rnaseh2b), found in Rattus norvegicus (Rat).